Consider the following 441-residue polypeptide: uncharacterized protein (441 aa).

217 to 224 is a binding site for ATP; it reads GETGTGKT.

The protein belongs to the GSP E family.

This is an uncharacterized protein from Bacillus anthracis.